Here is a 363-residue protein sequence, read N- to C-terminus: Probable auxin efflux carrier component 5a (363 aa).

10 consecutive transmembrane segments (helical) span residues V7–S27, C39–T59, V72–F92, S103–A123, L134–L154, F222–F242, V246–A266, L281–V301, V307–A327, and I342–I362.

Belongs to the auxin efflux carrier (TC 2.A.69.1) family. In terms of tissue distribution, expressed in leaves, shoot apex and panicles. Expressed in roots, stem bases, stems, leaves and young panicles.

The protein localises to the membrane. In terms of biological role, may act as a component of the auxin efflux carrier. The sequence is that of Probable auxin efflux carrier component 5a from Oryza sativa subsp. japonica (Rice).